Here is a 292-residue protein sequence, read N- to C-terminus: ATP synthase gamma chain (292 aa).

The protein belongs to the ATPase gamma chain family. F-type ATPases have 2 components, CF(1) - the catalytic core - and CF(0) - the membrane proton channel. CF(1) has five subunits: alpha(3), beta(3), gamma(1), delta(1), epsilon(1). CF(0) has three main subunits: a, b and c.

The protein resides in the cell membrane. Functionally, produces ATP from ADP in the presence of a proton gradient across the membrane. The gamma chain is believed to be important in regulating ATPase activity and the flow of protons through the CF(0) complex. The protein is ATP synthase gamma chain of Streptococcus mutans serotype c (strain ATCC 700610 / UA159).